A 65-amino-acid polypeptide reads, in one-letter code: Large ribosomal subunit protein bL31 (65 aa).

Zn(2+) is bound by residues C16, C18, C36, and C39.

The protein belongs to the bacterial ribosomal protein bL31 family. Type A subfamily. In terms of assembly, part of the 50S ribosomal subunit. Zn(2+) serves as cofactor.

In terms of biological role, binds the 23S rRNA. This is Large ribosomal subunit protein bL31 from Campylobacter jejuni subsp. doylei (strain ATCC BAA-1458 / RM4099 / 269.97).